The chain runs to 1254 residues: Zinc finger protein BRUTUS-like At1g18910 (1254 aa).

Residues 1–30 (MGVGDPLPLPPEKNRREVNKPPDIASTSSS) are disordered. A helical transmembrane segment spans residues 454-474 (IHFLPLGLLKCVIMWFSAQLP). The CHY-type zinc finger occupies 1013–1082 (PHKLIFGCKH…ASCSNISCSS (70 aa)). Residues C1020, H1022, C1033, C1034, C1040, C1043, H1044, H1050, C1062, C1065, C1075, C1080, C1089, C1092, H1103, C1104, C1107, C1110, H1122, C1123, C1126, C1129, H1137, and C1139 each coordinate Zn(2+). The CTCHY-type zinc finger occupies 1084–1147 (MGKYYCKICK…VCREKCLEDN (64 aa)). Residues 1148 to 1190 (CPICHEYIFTSNSPVKALPCGHVMHSTCFQEYTCSHYTCPICS) form an RING-type; atypical zinc finger.

In terms of assembly, binds zinc and iron ions.

It is found in the membrane. It localises to the nucleus. The protein operates within protein modification; protein ubiquitination. Probable E3 ubiquitin-protein ligase that may regulate the response to iron deficiency and thus contributes to iron homeostasis. This Arabidopsis thaliana (Mouse-ear cress) protein is Zinc finger protein BRUTUS-like At1g18910.